The sequence spans 379 residues: Ribosomal RNA large subunit methyltransferase G (379 aa).

The protein belongs to the methyltransferase superfamily. RlmG family.

The protein localises to the cytoplasm. It catalyses the reaction guanosine(1835) in 23S rRNA + S-adenosyl-L-methionine = N(2)-methylguanosine(1835) in 23S rRNA + S-adenosyl-L-homocysteine + H(+). Its function is as follows. Specifically methylates the guanine in position 1835 (m2G1835) of 23S rRNA. The sequence is that of Ribosomal RNA large subunit methyltransferase G from Pectobacterium atrosepticum (strain SCRI 1043 / ATCC BAA-672) (Erwinia carotovora subsp. atroseptica).